The following is a 338-amino-acid chain: MGGINMEDNKKTIFSGIQPSGNLTIGNYFGALKNWVKLQDEYNCFYCIVDLHAITVRQVPQELRKRTLEVLAVYIASGLDPEKNTLFIQSHVPAHTEAAWLLNCFTYLGELNRMTQFKDKSQNAGESISAGLLNYPVLMAADILLYNADLVPVGNDQKQHLELTRDIATRFNNLYSPTFKVPEPYIGKTGARIMDLQEPKKKMSKSAENKNGYILIMDPPNIIQNKINRAVTDNEGIVRYSDEQPGVKNLMNILSTATGKNVESIEKEYAGLGYSKFKKDVAEAIIAEVEPLQKEVKRYLEDKSYLEKVYKEGAQKASYVANKTLSKMKRKIGFVLDK.

ATP is bound by residues 18–20 (QPS) and 26–27 (GN). The 'HIGH' region motif lies at 19–27 (PSGNLTIGN). Asp-142 provides a ligand contact to L-tryptophan. ATP contacts are provided by residues 154–156 (GND), Ile-193, and 202–206 (KMSKS). The 'KMSKS' region motif lies at 202–206 (KMSKS).

The protein belongs to the class-I aminoacyl-tRNA synthetase family. As to quaternary structure, homodimer.

Its subcellular location is the cytoplasm. The enzyme catalyses tRNA(Trp) + L-tryptophan + ATP = L-tryptophyl-tRNA(Trp) + AMP + diphosphate + H(+). Its function is as follows. Catalyzes the attachment of tryptophan to tRNA(Trp). The sequence is that of Tryptophan--tRNA ligase from Clostridium tetani (strain Massachusetts / E88).